Here is a 542-residue protein sequence, read N- to C-terminus: La-related protein 7 homolog (542 aa).

The HTH La-type RNA-binding domain occupies V112–Q239. The 89-residue stretch at R247 to K335 folds into the RRM domain. Residues E374–K542 enclose the xRRM domain.

The protein belongs to the LARP7 family. In terms of assembly, component of the telomerase holoenzyme complex, composed of the catalytic core (the catalytic subunit TERT, the telomerase RNA template component TER and TAP65/p65), which is associated with two heterotrimeric subcomplexes: (i) the replication protein A (RPA)-related subcomplex, composed of TEB1, RPA2/TEB2 and RPA3/TEB3 and (ii) the CST-like subcomplex, composed of TAP75/p75, TAP45/p45 and TAP19/p19. TEB1 and the CST-like subcomplex are tethered to the catalytic core by TAP50/p50.

It localises to the chromosome. The protein resides in the telomere. Functionally, RNA-binding protein required for assembly of the holoenzyme telomerase ribonucleoprotein (RNP) complex. Telomerase is an essential ribonucleoprotein enzyme that copies new telomeric repeats onto chromosome ends by repetitively synthesizing the short telomere-repeat sequence 5'-TTGGGG-3' using an RNA template component TER. TAP65/p65 specifically binds telomerase RNA template TER and is required for biogenesis and placement of the TER stem-terminus element: TAP65/p65 first protects the 3'-end of TER from degradation and acts as a chaperone to correctly fold TER for protein binding; it then bends TER stem-loop IV to position it for interaction of stem-loop IV with catalytic TERT RNA-binding domain. This chain is La-related protein 7 homolog, found in Tetrahymena thermophila (strain SB210).